We begin with the raw amino-acid sequence, 199 residues long: Protein Maeo_0138 (199 aa).

In terms of domain architecture, AMMECR1 spans 7-197 (EEGKFAVKFA…ELSPNGKIVE (191 aa)).

This Methanococcus aeolicus (strain ATCC BAA-1280 / DSM 17508 / OCM 812 / Nankai-3) protein is Protein Maeo_0138.